The chain runs to 287 residues: Melatonin receptor type 1B-A (287 aa).

The Extracellular segment spans residues 1–28; it reads MPENVSLIRNRTEVGQGRAWGSGAGARP. N4 and N10 each carry an N-linked (GlcNAc...) asparagine glycan. Residues 29–49 form a helical membrane-spanning segment; the sequence is AWVVMVLAGVLIFTSVVDVLG. The Cytoplasmic segment spans residues 50-69; sequence NVLVIISVLRNRKLRNAGNA. The chain crosses the membrane as a helical span at residues 70-90; that stretch reads FVVSLAFADLLVVCYPYPLVL. The Extracellular segment spans residues 91 to 107; the sequence is HAMLHAGWLPGEMECKV. An intrachain disulfide couples C105 to C182. Residues 108–128 traverse the membrane as a helical segment; the sequence is SGFLMGASVIGSIFNITAIAI. The Cytoplasmic segment spans residues 129–149; it reads NRYCFICQANTYEKIYGRAGT. The helical transmembrane segment at 150–170 threads the bilayer; the sequence is LVLLTLVWVLTAIAILPNLSL. The Extracellular segment spans residues 171–192; the sequence is GSLTYDPRVYSCTFSQTTSAGY. A helical transmembrane segment spans residues 193 to 213; the sequence is TIAVVTVHFLLPIAVVTFCYL. The Cytoplasmic segment spans residues 214–245; it reads RIWVLVLRVRRRVTTDVRPRLRPSELRHFLTM. A helical membrane pass occupies residues 246–266; that stretch reads FVVFVLFAVCWAPLNLIGLAV. Over 267–275 the chain is Extracellular; sequence AVDPPRVGP. A helical transmembrane segment spans residues 276–287; it reads LVPDWLFVMSYF.

The protein belongs to the G-protein coupled receptor 1 family.

It is found in the cell membrane. Functionally, high affinity receptor for melatonin. The activity of this receptor is mediated by pertussis toxin sensitive G proteins that inhibits adenylate cyclase activity. In Danio rerio (Zebrafish), this protein is Melatonin receptor type 1B-A (mtnr1ba).